The sequence spans 720 residues: uncharacterized protein (720 aa).

Gly2 carries the N-myristoyl glycine; by host lipid modification.

This is an uncharacterized protein from Cryphonectria parasitica mycoreovirus 1 (strain 9B21) (CpMYRV-1).